Reading from the N-terminus, the 77-residue chain is Large ribosomal subunit protein bL28 (77 aa).

It belongs to the bacterial ribosomal protein bL28 family.

The polypeptide is Large ribosomal subunit protein bL28 (Methylibium petroleiphilum (strain ATCC BAA-1232 / LMG 22953 / PM1)).